A 360-amino-acid chain; its full sequence is MSKQILILPGDGIGPEIMAEAVKVLELANDKYSLGFELSHDVIGGAAIDKHGVPLADETLDRARAADAVLLGAVGGPKWDKIERDIRPERGLLKIRAQLGLFGNLRPAILYPQLADASSLKPEIVSGLDILIVRELTGGIYFGAPRGTRELENGERQSYDTLPYSESEIRRIARVGFDMARVRGKKLCSVDKANVLASSQLWREVVEQVAKDYPDVELSHMYVDNAAMQLVRAPKQFDVIVTDNMFGDILSDEASMLTGSIGMLPSASLDANNKGMYEPCHGSAPDIAGQGIANPLATILSVSMMLRYSFNLTEAADAIEQAVSRVLDQGLRTGDIWSAGCTKVGTQEMGDAVVAALRNL.

76 to 89 (GPKWDKIERDIRPE) provides a ligand contact to NAD(+). The substrate site is built by R96, R106, R134, and D224. Mg(2+) is bound by residues D224, D248, and D252. NAD(+) is bound at residue 282-294 (GSAPDIAGQGIAN).

It belongs to the isocitrate and isopropylmalate dehydrogenases family. LeuB type 1 subfamily. In terms of assembly, homodimer. Mg(2+) serves as cofactor. The cofactor is Mn(2+).

Its subcellular location is the cytoplasm. The enzyme catalyses (2R,3S)-3-isopropylmalate + NAD(+) = 4-methyl-2-oxopentanoate + CO2 + NADH. Its pathway is amino-acid biosynthesis; L-leucine biosynthesis; L-leucine from 3-methyl-2-oxobutanoate: step 3/4. Functionally, catalyzes the oxidation of 3-carboxy-2-hydroxy-4-methylpentanoate (3-isopropylmalate) to 3-carboxy-4-methyl-2-oxopentanoate. The product decarboxylates to 4-methyl-2 oxopentanoate. This Pseudomonas fluorescens (strain ATCC BAA-477 / NRRL B-23932 / Pf-5) protein is 3-isopropylmalate dehydrogenase.